The primary structure comprises 182 residues: UPF0397 protein BCG9842_B2659 (182 aa).

Helical transmembrane passes span 9-29 (VVAIGIGAALYGILGLWGFSI), 40-60 (AILTVFGALFGPVAGLLIGLI), 71-91 (WGIWWGWVISSGIIGFSMGLI), 114-134 (ITGLVGIVIAIIFAGAFDIIV), and 142-162 (IVIQVLGATISDVIVFLVLGL).

The protein belongs to the UPF0397 family.

It localises to the cell membrane. The polypeptide is UPF0397 protein BCG9842_B2659 (Bacillus cereus (strain G9842)).